We begin with the raw amino-acid sequence, 197 residues long: FMN-dependent NADH:quinone oxidoreductase (197 aa).

FMN-binding positions include S10, S16–S18, M93–F96, and T137–G140.

It belongs to the azoreductase type 1 family. Homodimer. FMN serves as cofactor.

The catalysed reaction is 2 a quinone + NADH + H(+) = 2 a 1,4-benzosemiquinone + NAD(+). It carries out the reaction N,N-dimethyl-1,4-phenylenediamine + anthranilate + 2 NAD(+) = 2-(4-dimethylaminophenyl)diazenylbenzoate + 2 NADH + 2 H(+). Its function is as follows. Quinone reductase that provides resistance to thiol-specific stress caused by electrophilic quinones. Functionally, also exhibits azoreductase activity. Catalyzes the reductive cleavage of the azo bond in aromatic azo compounds to the corresponding amines. This chain is FMN-dependent NADH:quinone oxidoreductase, found in Shewanella loihica (strain ATCC BAA-1088 / PV-4).